The following is a 111-amino-acid chain: MIPGEYQLKKGDIELCVGRDSFVIEVANTGDRPIQVGSHYHFAETNSALSFDRKKAYGHRLAIPAGTATRFEPGQKREVSLLPYAGLRRIFGFRGEVMGALDDNSDSGETR.

It belongs to the urease beta subunit family. Heterotrimer of UreA (gamma), UreB (beta) and UreC (alpha) subunits. Three heterotrimers associate to form the active enzyme.

It localises to the cytoplasm. It carries out the reaction urea + 2 H2O + H(+) = hydrogencarbonate + 2 NH4(+). It participates in nitrogen metabolism; urea degradation; CO(2) and NH(3) from urea (urease route): step 1/1. This chain is Urease subunit beta, found in Psychrobacter cryohalolentis (strain ATCC BAA-1226 / DSM 17306 / VKM B-2378 / K5).